Reading from the N-terminus, the 165-residue chain is Chorismate pyruvate-lyase (165 aa).

4 residues coordinate substrate: M35, R77, L115, and E156.

It belongs to the UbiC family. In terms of assembly, monomer.

It localises to the cytoplasm. It catalyses the reaction chorismate = 4-hydroxybenzoate + pyruvate. Its pathway is cofactor biosynthesis; ubiquinone biosynthesis. Functionally, removes the pyruvyl group from chorismate, with concomitant aromatization of the ring, to provide 4-hydroxybenzoate (4HB) for the ubiquinone pathway. In Citrobacter koseri (strain ATCC BAA-895 / CDC 4225-83 / SGSC4696), this protein is Chorismate pyruvate-lyase.